Reading from the N-terminus, the 330-residue chain is D-xylose-binding periplasmic protein (330 aa).

Residues 1–23 form the signal peptide; sequence MKIKNILLTLCTSLLLTNVAAHA.

The protein belongs to the bacterial solute-binding protein 2 family.

It localises to the periplasm. Functionally, involved in the high-affinity D-xylose membrane transport system. Binds with high affinity to xylose. The sequence is that of D-xylose-binding periplasmic protein (xylF) from Escherichia coli (strain K12).